The sequence spans 98 residues: NADH-ubiquinone oxidoreductase chain 4L (98 aa).

Helical transmembrane passes span 1 to 21, 29 to 49, and 61 to 81; these read MTMV…GLLM, SLLC…VTIL, and IILL…LVMV.

It belongs to the complex I subunit 4L family. As to quaternary structure, core subunit of respiratory chain NADH dehydrogenase (Complex I) which is composed of 45 different subunits.

It is found in the mitochondrion inner membrane. It catalyses the reaction a ubiquinone + NADH + 5 H(+)(in) = a ubiquinol + NAD(+) + 4 H(+)(out). Its function is as follows. Core subunit of the mitochondrial membrane respiratory chain NADH dehydrogenase (Complex I) which catalyzes electron transfer from NADH through the respiratory chain, using ubiquinone as an electron acceptor. Part of the enzyme membrane arm which is embedded in the lipid bilayer and involved in proton translocation. The chain is NADH-ubiquinone oxidoreductase chain 4L (MT-ND4L) from Neomonachus schauinslandi (Hawaiian monk seal).